The primary structure comprises 328 residues: dTDP-3,4-didehydro-2,6-dideoxy-alpha-D-glucose 3-reductase (328 aa).

Arg-20 contributes to the substrate binding site. NADP(+)-binding positions include 38-39, Leu-75, and His-80; that span reads SR. Lys-98 functions as the Proton donor in the catalytic mechanism. The NADP(+) site is built by Arg-166 and Asp-178. Residues Tyr-236 and Thr-256 each coordinate substrate.

This sequence belongs to the Gfo/Idh/MocA family.

The catalysed reaction is dTDP-4-dehydro-2,6-dideoxy-alpha-D-glucose + NADP(+) = dTDP-3,4-didehydro-2,6-dideoxy-alpha-D-glucose + NADPH + H(+). It participates in antibiotic biosynthesis. Involved in the biosynthesis of one of the two 2,6-deoxysugars, dTDP-L-oleandrose, attached to the macrolactone ring oleandolide to produce the aglycone antibiotic oleandomycin. Catalyzes the reduction of the C-3 keto moiety of dTDP-3,4-diketo-2,6-dideoxy-alpha-D-glucose to yield dTDP-4-keto-2,6-dideoxy-alpha-D-glucose. NADPH is the better reductant, however NADH can also be used. This Streptomyces antibioticus protein is dTDP-3,4-didehydro-2,6-dideoxy-alpha-D-glucose 3-reductase.